A 116-amino-acid polypeptide reads, in one-letter code: Large ribosomal subunit protein uL18 (116 aa).

It belongs to the universal ribosomal protein uL18 family. In terms of assembly, part of the 50S ribosomal subunit; part of the 5S rRNA/L5/L18/L25 subcomplex. Contacts the 5S and 23S rRNAs.

Its function is as follows. This is one of the proteins that bind and probably mediate the attachment of the 5S RNA into the large ribosomal subunit, where it forms part of the central protuberance. In Shewanella sp. (strain ANA-3), this protein is Large ribosomal subunit protein uL18.